A 503-amino-acid polypeptide reads, in one-letter code: Putative FBD-associated F-box protein At5g56410 (503 aa).

Residues Asp-2–Asp-50 form the F-box domain. The FBD domain occupies Phe-361 to Ile-412.

The protein is Putative FBD-associated F-box protein At5g56410 of Arabidopsis thaliana (Mouse-ear cress).